Reading from the N-terminus, the 298-residue chain is GTPase Era (298 aa).

One can recognise an Era-type G domain in the interval 3-170 (KSGFVAILGR…VQLLKDNLEE (168 aa)). The segment at 11–18 (GRPNVGKS) is G1. 11 to 18 (GRPNVGKS) provides a ligand contact to GTP. The interval 37 to 41 (QTTRN) is G2. The segment at 58-61 (DTPG) is G3. GTP contacts are provided by residues 58 to 62 (DTPGI) and 120 to 123 (NKID). Residues 120–123 (NKID) are G4. Positions 149-151 (ISA) are G5. The 79-residue stretch at 201-279 (TQQEVPHSVA…YLETWVKVKK (79 aa)) folds into the KH type-2 domain.

The protein belongs to the TRAFAC class TrmE-Era-EngA-EngB-Septin-like GTPase superfamily. Era GTPase family. Monomer.

It is found in the cytoplasm. The protein localises to the cell membrane. In terms of biological role, an essential GTPase that binds both GDP and GTP, with rapid nucleotide exchange. Plays a role in 16S rRNA processing and 30S ribosomal subunit biogenesis and possibly also in cell cycle regulation and energy metabolism. This chain is GTPase Era, found in Streptococcus equi subsp. equi (strain 4047).